The primary structure comprises 725 residues: Dolichyl-phosphate-mannose--protein mannosyltransferase 5 (725 aa).

The next 6 helical transmembrane spans lie at 34-54 (QFAVFSILLISLIRLYKLYIP), 117-137 (YLWLRLFSGICGIGHVLLTFF), 145-165 (SVISIVITILICLENSMVTVS), 192-212 (IPFTGCWYFNLFVTGIALGLN), 219-239 (GLFTFAWVGILTCVQLWEILG), and 256-276 (VVAFIMVPLTIYCSVFYIHFE). MIR domains are found at residues 303–356 (PLQV…IETK), 368–427 (QREV…IRML), and 439–495 (LIKL…VESS). N-linked (GlcNAc...) asparagine glycosylation occurs at Asn409. Helical transmembrane passes span 570-590 (IYYLGNVAIYYSVFFVGLIAI), 619-639 (FYNNSWPYLVGWFINYIPYCL), 644-664 (LYLHHYLSALNFGILLLSQYL), and 673-693 (IIGGIITATIFVSAIYCFYEF).

The protein belongs to the glycosyltransferase 39 family.

Its subcellular location is the endoplasmic reticulum membrane. It catalyses the reaction a di-trans,poly-cis-dolichyl beta-D-mannosyl phosphate + L-seryl-[protein] = 3-O-(alpha-D-mannosyl)-L-seryl-[protein] + a di-trans,poly-cis-dolichyl phosphate + H(+). It carries out the reaction a di-trans,poly-cis-dolichyl beta-D-mannosyl phosphate + L-threonyl-[protein] = 3-O-(alpha-D-mannosyl)-L-threonyl-[protein] + a di-trans,poly-cis-dolichyl phosphate + H(+). It participates in protein modification; protein glycosylation. Protein mannosyltransferase (PMT) involved in hyphal morphogenesis and drug sensitivity. Transfers mannose from Dol-P-mannose to Ser or Thr residues on proteins. PMT1, PMT2 and PMT4 account for most of the protein-O-glycosylation activity, while PMT5 and PMT6 may specifically modulate a much narrower spectrum of target proteins. Required for biofilm formation. The protein is Dolichyl-phosphate-mannose--protein mannosyltransferase 5 of Candida albicans (strain SC5314 / ATCC MYA-2876) (Yeast).